The primary structure comprises 461 residues: DNA polymerase delta subunit 3 (461 aa).

Disordered stretches follow at residues 148-229 (VAQA…SAKG), 249-380 (VPGQ…KRVL), and 399-461 (YESE…CQKK). Residues 155 to 172 (ARSSSQTPSDTSAVSTPP) are compositionally biased toward polar residues. Positions 205–214 (DANKEPKAKE) are enriched in basic and acidic residues. Residues 215–228 (APSVSAASSKPSAK) are compositionally biased toward low complexity. The segment covering 279-304 (KPGRKTEPAKIQQKDKKSKMKRMDKS) has biased composition (basic and acidic residues). Over residues 371–380 (GKKRKRKRVL) the composition is skewed to basic residues. Over residues 427–436 (VKKEPKEERK) the composition is skewed to basic and acidic residues. The PIP-box motif lies at 451–458 (QISIMGFC).

Component of both the DNA polymerase delta and DNA polymerase zeta complexes. The tetrameric DNA polymerase delta complex (Pol-delta4), which consists of POLD1/p125, POLD2/p50, POLD3/p66/p68 and POLD4/p12, with POLD1 bearing DNA polymerase and 3' to 5' proofreading exonuclease activities.

The protein resides in the cytoplasm. It localises to the nucleus. Functionally, accessory component of both the DNA polymerase delta complex and the DNA polymerase zeta complex. As a component of the trimeric and tetrameric DNA polymerase delta complexes (Pol-delta3 and Pol-delta4, respectively), plays a role in high fidelity genome replication, including in lagging strand synthesis, and repair. Required for optimal Pol-delta activity. Stabilizes the Pol-delta complex and plays a major role in Pol-delta stimulation by PCNA. Pol-delta3 and Pol-delta4 are characterized by the absence or the presence of POLD4. They exhibit differences in catalytic activity. Most notably, Pol-delta3 shows higher proofreading activity than Pol-delta4. Although both Pol-delta3 and Pol-delta4 process Okazaki fragments in vitro, Pol-delta3 may also be better suited to fulfill this task, exhibiting near-absence of strand displacement activity compared to Pol-delta4 and stalling on encounter with the 5'-blocking oligonucleotides. Pol-delta3 idling process may avoid the formation of a gap, while maintaining a nick that can be readily ligated. Along with DNA polymerase kappa, DNA polymerase delta carries out approximately half of nucleotide excision repair (NER) synthesis following UV irradiation. In this context, POLD3, along with PCNA and RFC1-replication factor C complex, is required to recruit POLD1, the catalytic subunit of the polymerase delta complex, to DNA damage sites. Under conditions of DNA replication stress, required for the repair of broken replication forks through break-induced replication (BIR). Involved in the translesion synthesis (TLS) of templates carrying O6-methylguanine or abasic sites performed by Pol-delta4, independently of DNA polymerase zeta (REV3L) or eta (POLH). Facilitates abasic site bypass by DNA polymerase delta by promoting extension from the nucleotide inserted opposite the lesion. Also involved in TLS, as a component of the tetrameric DNA polymerase zeta complex. Along with POLD2, dramatically increases the efficiency and processivity of DNA synthesis of the DNA polymerase zeta complex compared to the minimal zeta complex, consisting of only REV3L and REV7. The protein is DNA polymerase delta subunit 3 (POLD3) of Gallus gallus (Chicken).